A 307-amino-acid chain; its full sequence is Coproporphyrin III ferrochelatase (307 aa).

Residues Tyr12, Arg29, 45 to 46 (RY), Ser53, and Tyr124 contribute to the Fe-coproporphyrin III site. Fe(2+) contacts are provided by His181 and Glu263.

It belongs to the ferrochelatase family.

Its subcellular location is the cytoplasm. It catalyses the reaction Fe-coproporphyrin III + 2 H(+) = coproporphyrin III + Fe(2+). The protein operates within porphyrin-containing compound metabolism; protoheme biosynthesis. Its function is as follows. Involved in coproporphyrin-dependent heme b biosynthesis. Catalyzes the insertion of ferrous iron into coproporphyrin III to form Fe-coproporphyrin III. This Staphylococcus saprophyticus subsp. saprophyticus (strain ATCC 15305 / DSM 20229 / NCIMB 8711 / NCTC 7292 / S-41) protein is Coproporphyrin III ferrochelatase.